The primary structure comprises 361 residues: Phospho-N-acetylmuramoyl-pentapeptide-transferase (361 aa).

Helical transmembrane passes span Leu28–Leu48, Thr74–Leu94, Ile99–Ala119, Ser133–Asp153, Leu168–Ser188, Val203–Ile223, Thr236–Phe256, Val263–Ile283, Ile288–Val308, and Lys338–Leu358.

It belongs to the glycosyltransferase 4 family. MraY subfamily. The cofactor is Mg(2+).

It localises to the cell inner membrane. The catalysed reaction is UDP-N-acetyl-alpha-D-muramoyl-L-alanyl-gamma-D-glutamyl-meso-2,6-diaminopimeloyl-D-alanyl-D-alanine + di-trans,octa-cis-undecaprenyl phosphate = di-trans,octa-cis-undecaprenyl diphospho-N-acetyl-alpha-D-muramoyl-L-alanyl-D-glutamyl-meso-2,6-diaminopimeloyl-D-alanyl-D-alanine + UMP. It functions in the pathway cell wall biogenesis; peptidoglycan biosynthesis. In terms of biological role, catalyzes the initial step of the lipid cycle reactions in the biosynthesis of the cell wall peptidoglycan: transfers peptidoglycan precursor phospho-MurNAc-pentapeptide from UDP-MurNAc-pentapeptide onto the lipid carrier undecaprenyl phosphate, yielding undecaprenyl-pyrophosphoryl-MurNAc-pentapeptide, known as lipid I. This chain is Phospho-N-acetylmuramoyl-pentapeptide-transferase, found in Rickettsia prowazekii (strain Madrid E).